The sequence spans 342 residues: Deoxyguanosinetriphosphate triphosphohydrolase-like protein (342 aa).

One can recognise an HD domain in the interval 75–190 (RLVHTLEVSQ…VRFADKIAYV (116 aa)).

This sequence belongs to the dGTPase family. Type 2 subfamily.

This chain is Deoxyguanosinetriphosphate triphosphohydrolase-like protein, found in Clostridium perfringens (strain SM101 / Type A).